We begin with the raw amino-acid sequence, 336 residues long: Tetraacyldisaccharide 4'-kinase (336 aa).

60-67 lines the ATP pocket; that stretch reads TVGGTGKT.

Belongs to the LpxK family.

It catalyses the reaction a lipid A disaccharide + ATP = a lipid IVA + ADP + H(+). Its pathway is glycolipid biosynthesis; lipid IV(A) biosynthesis; lipid IV(A) from (3R)-3-hydroxytetradecanoyl-[acyl-carrier-protein] and UDP-N-acetyl-alpha-D-glucosamine: step 6/6. Transfers the gamma-phosphate of ATP to the 4'-position of a tetraacyldisaccharide 1-phosphate intermediate (termed DS-1-P) to form tetraacyldisaccharide 1,4'-bis-phosphate (lipid IVA). The protein is Tetraacyldisaccharide 4'-kinase of Pseudomonas fluorescens (strain SBW25).